A 40-amino-acid chain; its full sequence is Photosystem II reaction center protein J (40 aa).

The helical transmembrane segment at 8–28 (IPLWLVALVAGTGVLVVVGLF) threads the bilayer.

It belongs to the PsbJ family. As to quaternary structure, PSII is composed of 1 copy each of membrane proteins PsbA, PsbB, PsbC, PsbD, PsbE, PsbF, PsbH, PsbI, PsbJ, PsbK, PsbL, PsbM, PsbT, PsbX, PsbY, PsbZ, Psb30/Ycf12, peripheral proteins PsbO, CyanoQ (PsbQ), PsbU, PsbV and a large number of cofactors. It forms dimeric complexes.

The protein resides in the cellular thylakoid membrane. Its function is as follows. One of the components of the core complex of photosystem II (PSII). PSII is a light-driven water:plastoquinone oxidoreductase that uses light energy to abstract electrons from H(2)O, generating O(2) and a proton gradient subsequently used for ATP formation. It consists of a core antenna complex that captures photons, and an electron transfer chain that converts photonic excitation into a charge separation. The sequence is that of Photosystem II reaction center protein J from Trichodesmium erythraeum (strain IMS101).